Here is a 42-residue protein sequence, read N- to C-terminus: Potassium channel toxin gamma-KTx 1.8 (42 aa).

4 disulfide bridges follow: Cys5/Cys23, Cys11/Cys34, Cys20/Cys39, and Cys24/Cys41.

The protein belongs to the ergtoxin family. Gamma-KTx 1 subfamily. As to expression, expressed by the venom gland.

Its subcellular location is the secreted. In terms of biological role, blocks in a reversible manner human and rat Kv11.1/KCNH2/ERG1 potassium channels. Also completely and irreversibly blocks rat Kv11.2/KCNH6/ERG2 and human Kv11.3/KCNH7/ERG3 channels. Also weakly inhibits Kir2.1/KCNJ2 and Kv1.2/KCNA2 potassium channels. The sequence is that of Potassium channel toxin gamma-KTx 1.8 from Centruroides elegans (Bark scorpion).